Here is a 235-residue protein sequence, read N- to C-terminus: MYALSEKGERIRAMFGSIAPRYDLLNRLLSLGIDRRWRRFAVKKIGLNGAGRVLDVATGTGDVALEIASQTPASVSIVGIDFTPEMIELGRVKVKDSRHSGRITLEVAPCEEIPFDDGSFDAATISFGIRNVVDRIKGLTEMHRVLKGGGKIVILEFSTPTLPVFKDLYHFYFLKVLPKIGGAFSRFSAYQYLPDSVLEFPSRDVFKGMMTQVGFKDVRHFDLTGGIATVYVGTK.

The S-adenosyl-L-methionine site is built by Thr60, Asp81, and Ser126.

This sequence belongs to the class I-like SAM-binding methyltransferase superfamily. MenG/UbiE family.

The catalysed reaction is a 2-demethylmenaquinol + S-adenosyl-L-methionine = a menaquinol + S-adenosyl-L-homocysteine + H(+). It catalyses the reaction a 2-methoxy-6-(all-trans-polyprenyl)benzene-1,4-diol + S-adenosyl-L-methionine = a 5-methoxy-2-methyl-3-(all-trans-polyprenyl)benzene-1,4-diol + S-adenosyl-L-homocysteine + H(+). The protein operates within quinol/quinone metabolism; menaquinone biosynthesis; menaquinol from 1,4-dihydroxy-2-naphthoate: step 2/2. It participates in cofactor biosynthesis; ubiquinone biosynthesis. Its function is as follows. Methyltransferase required for the conversion of demethylmenaquinol (DMKH2) to menaquinol (MKH2) and the conversion of 2-polyprenyl-6-methoxy-1,4-benzoquinol (DDMQH2) to 2-polyprenyl-3-methyl-6-methoxy-1,4-benzoquinol (DMQH2). This chain is Ubiquinone/menaquinone biosynthesis C-methyltransferase UbiE, found in Geobacter sp. (strain M21).